Reading from the N-terminus, the 361-residue chain is Diacylglycerol O-acyltransferase 2 (361 aa).

Residues 1–42 (MKTIIAAYSGVLRGTGSSLLSAVHDLPNIPWLSKSSVVRHLQ) are Cytoplasmic-facing. A helical transmembrane segment spans residues 43–61 (IISVLQWVLSFLILGVACT). Residues 62-65 (AVLV) are Lumenal-facing. Residues 66-85 (YIFCTDLWLIAALYLTWMVL) form a helical membrane-spanning segment. At 86–361 (DWNTPYKGGR…LHDSEMLEIV (276 aa)) the chain is on the cytoplasmic side.

Belongs to the diacylglycerol acyltransferase family.

The protein localises to the endoplasmic reticulum membrane. Its subcellular location is the lipid droplet. It is found in the cytoplasm. It localises to the perinuclear region. It carries out the reaction an acyl-CoA + a 1,2-diacyl-sn-glycerol = a triacyl-sn-glycerol + CoA. It catalyses the reaction all-trans-retinol + an acyl-CoA = an all-trans-retinyl ester + CoA. The catalysed reaction is 2-(9Z-octadecenoyl)-glycerol + (9Z)-octadecenoyl-CoA = 1,2-di-(9Z-octadecenoyl)-sn-glycerol + CoA. The enzyme catalyses 1,2-di-(9Z-octadecenoyl)-sn-glycerol + (9Z)-octadecenoyl-CoA = 1,2,3-tri-(9Z-octadecenoyl)-glycerol + CoA. It carries out the reaction all-trans-retinol + hexadecanoyl-CoA = all-trans-retinyl hexadecanoate + CoA. It catalyses the reaction 1-O-(9Z-octadecenyl)-glycerol + (9Z)-octadecenoyl-CoA = 1-O-(9Z-octadecyl)-3-(9Z-octadecenoyl)-glycerol + CoA. The catalysed reaction is 1-(9Z-octadecenoyl)-glycerol + (9Z)-octadecenoyl-CoA = 1,2-di-(9Z-octadecenoyl)-glycerol + CoA. The enzyme catalyses 1,2-di-(9Z-octadecenoyl)-sn-glycerol + hexadecanoyl-CoA = 1,2-di-(9Z)-octadecenoyl-3-hexadecanoyl-sn-glycerol + CoA. It carries out the reaction 1,3-di-(9Z-octadecenoyl)-glycerol + (9Z)-octadecenoyl-CoA = 1,2,3-tri-(9Z-octadecenoyl)-glycerol + CoA. It catalyses the reaction 2,3-di-(9Z)-octadecenoyl-sn-glycerol + (9Z)-octadecenoyl-CoA = 1,2,3-tri-(9Z-octadecenoyl)-glycerol + CoA. The catalysed reaction is 2-(9Z-octadecenoyl)-glycerol + hexadecanoyl-CoA = 1-hexadecanoyl-2-(9Z-octadecenoyl)-sn-glycerol + CoA. It participates in glycerolipid metabolism; triacylglycerol biosynthesis. In terms of biological role, essential acyltransferase that catalyzes the terminal and only committed step in triacylglycerol synthesis by using diacylglycerol and fatty acyl CoA as substrates. Required for synthesis and storage of intracellular triglycerides. Probably plays a central role in cytosolic lipid accumulation. This is Diacylglycerol O-acyltransferase 2 (dgat2) from Xenopus tropicalis (Western clawed frog).